Here is a 391-residue protein sequence, read N- to C-terminus: 3-ketoacyl-CoA thiolase (391 aa).

C95 functions as the Acyl-thioester intermediate in the catalytic mechanism. Catalysis depends on proton acceptor residues H347 and C377.

Belongs to the thiolase-like superfamily. Thiolase family. In terms of assembly, heterotetramer of two alpha chains (FadB) and two beta chains (FadA).

It is found in the cytoplasm. The catalysed reaction is an acyl-CoA + acetyl-CoA = a 3-oxoacyl-CoA + CoA. The protein operates within lipid metabolism; fatty acid beta-oxidation. Its function is as follows. Catalyzes the final step of fatty acid oxidation in which acetyl-CoA is released and the CoA ester of a fatty acid two carbons shorter is formed. The polypeptide is 3-ketoacyl-CoA thiolase (Ectopseudomonas oleovorans (Pseudomonas oleovorans)).